Consider the following 391-residue polypeptide: Eukaryotic initiation factor 4A-3 (391 aa).

The Q motif motif lies at 18-46 (ASFAEMGIKDDLLRGVYQYGFEKPSAIQQ). Positions 49–219 (VLPIISGRDV…SKFMTDPVRI (171 aa)) constitute a Helicase ATP-binding domain. An ATP-binding site is contributed by 62 to 69 (AQSGTGKT). The short motif at 167 to 170 (DESD) is the DEAD box element. The Helicase C-terminal domain occupies 230–391 (GIKQFFVAVE…EMPMNVADLI (162 aa)).

The protein belongs to the DEAD box helicase family. eIF4A subfamily. As to quaternary structure, eIF4F is a multi-subunit complex, the composition of which varies with external and internal environmental conditions. It is composed of at least EIF4A, EIF4E and EIF4G.

It carries out the reaction ATP + H2O = ADP + phosphate + H(+). In terms of biological role, ATP-dependent RNA helicase which is a subunit of the eIF4F complex involved in cap recognition and is required for mRNA binding to ribosome. In the current model of translation initiation, eIF4A unwinds RNA secondary structures in the 5'-UTR of mRNAs which is necessary to allow efficient binding of the small ribosomal subunit, and subsequent scanning for the initiator codon. This chain is Eukaryotic initiation factor 4A-3, found in Nicotiana plumbaginifolia (Leadwort-leaved tobacco).